The chain runs to 433 residues: Xylose isomerase (433 aa).

Active-site residues include His-97 and Asp-100. Residues Glu-228, Glu-264, His-267, Asp-292, Asp-303, Asp-305, and Asp-334 each contribute to the Mg(2+) site.

It belongs to the xylose isomerase family. Homotetramer. The cofactor is Mg(2+).

Its subcellular location is the cytoplasm. The enzyme catalyses alpha-D-xylose = alpha-D-xylulofuranose. The protein is Xylose isomerase of Fervidobacterium gondwanense.